Reading from the N-terminus, the 195-residue chain is Small ribosomal subunit protein eS1 (195 aa).

It belongs to the eukaryotic ribosomal protein eS1 family.

This chain is Small ribosomal subunit protein eS1, found in Methanothermobacter thermautotrophicus (strain ATCC 29096 / DSM 1053 / JCM 10044 / NBRC 100330 / Delta H) (Methanobacterium thermoautotrophicum).